A 327-amino-acid polypeptide reads, in one-letter code: Carboxylesterase 20 (327 aa).

The Involved in the stabilization of the negatively charged intermediate by the formation of the oxyanion hole motif lies at 87–89 (HGG). Catalysis depends on serine 166, which acts as the Nucleophile. Active-site residues include aspartate 272 and histidine 302.

Belongs to the 'GDXG' lipolytic enzyme family. In terms of tissue distribution, expressed in roots, stems, flowers and siliques.

It catalyses the reaction a carboxylic ester + H2O = an alcohol + a carboxylate + H(+). Esterase activity measured in vitro with the synthetic substrate p-nitrophenyl acetate (pNPA) is inhibited by strigolactone. Carboxylesterase that possesses esterase activity in vitro with the synthetic substrate p-nitrophenyl acetate (pNPA). Binds strigolactones, but is not able to hydrolyze them. May be involved in the regulation of shoot branching. The chain is Carboxylesterase 20 from Arabidopsis thaliana (Mouse-ear cress).